The primary structure comprises 195 residues: ATP-dependent Clp protease proteolytic subunit (195 aa).

S96 (nucleophile) is an active-site residue. H121 is a catalytic residue.

The protein belongs to the peptidase S14 family. Fourteen ClpP subunits assemble into 2 heptameric rings which stack back to back to give a disk-like structure with a central cavity, resembling the structure of eukaryotic proteasomes.

The protein resides in the cytoplasm. The catalysed reaction is Hydrolysis of proteins to small peptides in the presence of ATP and magnesium. alpha-casein is the usual test substrate. In the absence of ATP, only oligopeptides shorter than five residues are hydrolyzed (such as succinyl-Leu-Tyr-|-NHMec, and Leu-Tyr-Leu-|-Tyr-Trp, in which cleavage of the -Tyr-|-Leu- and -Tyr-|-Trp bonds also occurs).. Functionally, cleaves peptides in various proteins in a process that requires ATP hydrolysis. Has a chymotrypsin-like activity. Plays a major role in the degradation of misfolded proteins. The polypeptide is ATP-dependent Clp protease proteolytic subunit (Elusimicrobium minutum (strain Pei191)).